A 524-amino-acid polypeptide reads, in one-letter code: Excitatory amino acid transporter 3 (524 aa).

Residues 1-18 (MGKPARKGCDWKRFLRNN) lie on the Cytoplasmic side of the membrane. Residues 19–38 (WLLLSTVVAVVLGIVIGVLV) traverse the membrane as a helical segment. Residues 39–61 (REYSKLSNLEKFYFSFPGEILMR) lie on the Extracellular side of the membrane. The chain crosses the membrane as a helical span at residues 62–82 (MLKLVILPLIVSSMITGVATL). The Cytoplasmic segment spans residues 83–93 (DSNVSGKIGLR). A helical transmembrane segment spans residues 94–114 (AVVYYFCTTLIAVILGIVLVV). Na(+)-binding residues include Y98, T101, and T102. Residues 115–205 (SIKPGVTQKV…KTKEYKVVGM (91 aa)) are Extracellular-facing. 2 N-linked (GlcNAc...) asparagine glycosylation sites follow: N178 and N195. The helical transmembrane segment at 206 to 229 (YSDGINVLGLIVFCLVLGIVIGRK) threads the bilayer. At 230–238 (WEKGQILVD) the chain is on the cytoplasmic side. A helical membrane pass occupies residues 239–266 (FFNALSDATMKIVQIIMCYMPIGILFLI). Over 267-286 (AGKIIEVEDWEIFRKLGLYM) the chain is Extracellular. Residues 287–308 (ATVLSGLAIHSIVILPLIYFII) traverse the membrane as a helical segment. Residues 309-313 (VRKNP) lie on the Cytoplasmic side of the membrane. Residues 314–344 (FQFAMGMAQALLTALMISSSSATLPVTFRCA) constitute an intramembrane region (discontinuously helical). L-aspartate contacts are provided by S331 and S333. The Cytoplasmic segment spans residues 345-353 (EEKNRVDKR). Residues 354-380 (ITRFVLPVGATINMDGTALYEAVAAVF) traverse the membrane as a helical segment. Na(+) is bound by residues G362, T364, N366, and D368. Residue T370 participates in L-aspartate binding. Residues 381 to 393 (IAQLNDLDLSVGQ) lie on the Extracellular side of the membrane. Residues 394-427 (IITISVTATAASIGAAGVPQPGLVTMVIVLSAVG) constitute an intramembrane region (discontinuously helical). Na(+) contacts are provided by S405, I406, and A408. V411 is a binding site for L-aspartate. At 428-440 (LPAEDVTLIIAVD) the chain is on the extracellular side. A helical transmembrane segment spans residues 441 to 462 (WLLDRFRTMVNVLGDAFGTGIV). 3 residues coordinate L-aspartate: R447, T448, and N451. Residues N451 and D455 each coordinate Na(+). Residues 463–524 (EKLSKKELEQ…TISFTQTSQF (62 aa)) are Cytoplasmic-facing. S517 and S522 each carry phosphoserine.

It belongs to the dicarboxylate/amino acid:cation symporter (DAACS) (TC 2.A.23) family. SLC1A1 subfamily. Homotrimer. Interacts with ARL6IP5. Interacts with RTN2 (via N-terminus); the interaction promotes cell surface expression of SLC1A1. Interacts with SORCS2; this interaction is important for normal expression at the cell membrane.

It is found in the cell membrane. The protein localises to the apical cell membrane. Its subcellular location is the synapse. It localises to the synaptosome. The protein resides in the early endosome membrane. It is found in the late endosome membrane. The protein localises to the recycling endosome membrane. The enzyme catalyses K(+)(in) + L-glutamate(out) + 3 Na(+)(out) + H(+)(out) = K(+)(out) + L-glutamate(in) + 3 Na(+)(in) + H(+)(in). It carries out the reaction K(+)(in) + L-aspartate(out) + 3 Na(+)(out) + H(+)(out) = K(+)(out) + L-aspartate(in) + 3 Na(+)(in) + H(+)(in). The catalysed reaction is D-aspartate(out) + K(+)(in) + 3 Na(+)(out) + H(+)(out) = D-aspartate(in) + K(+)(out) + 3 Na(+)(in) + H(+)(in). It catalyses the reaction K(+)(in) + L-cysteine(out) + 3 Na(+)(out) + H(+)(out) = K(+)(out) + L-cysteine(in) + 3 Na(+)(in) + H(+)(in). Sodium-dependent, high-affinity amino acid transporter that mediates the uptake of L-glutamate and also L-aspartate and D-aspartate. Can also transport L-cysteine. Functions as a symporter that transports one amino acid molecule together with two or three Na(+) ions and one proton, in parallel with the counter-transport of one K(+) ion. Mediates Cl(-) flux that is not coupled to amino acid transport; this avoids the accumulation of negative charges due to aspartate and Na(+) symport. Plays an important role in L-glutamate and L-aspartate reabsorption in renal tubuli. Plays a redundant role in the rapid removal of released glutamate from the synaptic cleft, which is essential for terminating the postsynaptic action of glutamate. Contributes to glutathione biosynthesis and protection against oxidative stress via its role in L-glutamate and L-cysteine transport. Negatively regulated by ARL6IP5. The protein is Excitatory amino acid transporter 3 (SLC1A1) of Bos taurus (Bovine).